Here is a 283-residue protein sequence, read N- to C-terminus: Glutamate racemase (283 aa).

Substrate is bound by residues 28–29 and 60–61; these read DS and YG. Catalysis depends on C92, which acts as the Proton donor/acceptor. Position 93 to 94 (93 to 94) interacts with substrate; it reads NT. The active-site Proton donor/acceptor is the C204. 205 to 206 contacts substrate; that stretch reads TH.

This sequence belongs to the aspartate/glutamate racemases family.

It carries out the reaction L-glutamate = D-glutamate. It functions in the pathway cell wall biogenesis; peptidoglycan biosynthesis. Provides the (R)-glutamate required for cell wall biosynthesis. This is Glutamate racemase from Klebsiella pneumoniae (strain 342).